Here is a 172-residue protein sequence, read N- to C-terminus: Centrin-2 (172 aa).

A disordered region spans residues 1 to 30 (MASNFKKANMASSSQRKRMSPKPELTEEQK). N-acetylalanine is present on Ala2. The tract at residues 2–25 (ASNFKKANMASSSQRKRMSPKPEL) is required for self-assembly. The residue at position 20 (Ser20) is a Phosphoserine. Lys22 participates in a covalent cross-link: Glycyl lysine isopeptide (Lys-Gly) (interchain with G-Cter in SUMO2). Thr26 is subject to Phosphothreonine. EF-hand domains are found at residues 28 to 63 (EQKQEIREAFDLFDADGTGTIDVKELKVAMRALGFE), 64 to 99 (PKKEEIKKMISEIDKEGTGKMNFGDFLTVMTQKMSE), 101 to 136 (DTKEEILKAFKLFDDDETGKISFKNLKRVAKELGEN), and 137 to 172 (LTDEELQEMIDEADRDGDGEVSEQEFLRIMKKTSLY). Ca(2+)-binding residues include Asp41, Asp43, Thr45, Thr47, and Glu52. 5 residues coordinate Ca(2+): Asp150, Asp152, Asp154, Glu156, and Glu161.

This sequence belongs to the centrin family. As to quaternary structure, monomer. Homooligomer. Interacts with SFI1. Interacts with CCP110. Component of the XPC complex composed of XPC, RAD23B and CETN2. Component of the nuclear pore complex (NPC)-associated TREX-2 complex (transcription and export complex 2), composed of at least GANP, 2 copies of ENY2, PCID2, SEM1/DSS1, and either centrin CETN2 or centrin CETN3. The TREX-2 complex also associates with ALYREF/ALY and with the nucleoporin NUP153. Interacts with USP49. Forms a microtubule-associated complex with POC5, POC1B and FAM161A. Interacts with CCDC15.

It is found in the cytoplasm. The protein localises to the cytoskeleton. Its subcellular location is the microtubule organizing center. It localises to the centrosome. The protein resides in the centriole. It is found in the nucleus envelope. The protein localises to the nucleus. Its subcellular location is the nuclear pore complex. Its function is as follows. Plays a fundamental role in microtubule organizing center structure and function. Required for centriole duplication and correct spindle formation. Has a role in regulating cytokinesis and genome stability via cooperation with CALM1 and CCP110. In terms of biological role, involved in global genome nucleotide excision repair (GG-NER) by acting as component of the XPC complex. Cooperatively with RAD23B appears to stabilize XPC. In vitro, stimulates DNA binding of the XPC:RAD23B dimer. Functionally, the XPC complex is proposed to represent the first factor bound at the sites of DNA damage and together with other core recognition factors, XPA, RPA and the TFIIH complex, is part of the pre-incision (or initial recognition) complex. The XPC complex recognizes a wide spectrum of damaged DNA characterized by distortions of the DNA helix such as single-stranded loops, mismatched bubbles or single-stranded overhangs. The orientation of XPC complex binding appears to be crucial for inducing a productive NER. XPC complex is proposed to recognize and to interact with unpaired bases on the undamaged DNA strand which is followed by recruitment of the TFIIH complex and subsequent scanning for lesions in the opposite strand in a 5'-to-3' direction by the NER machinery. Cyclobutane pyrimidine dimers (CPDs) which are formed upon UV-induced DNA damage esacpe detection by the XPC complex due to a low degree of structural perurbation. Instead they are detected by the UV-DDB complex which in turn recruits and cooperates with the XPC complex in the respective DNA repair. As a component of the TREX-2 complex, involved in the export of mRNAs to the cytoplasm through the nuclear pores. The polypeptide is Centrin-2 (CETN2) (Homo sapiens (Human)).